The primary structure comprises 383 residues: D-alanine--D-alanine ligase (383 aa).

In terms of domain architecture, ATP-grasp spans 169 to 373 (KALLRAAGLP…YPQLVDRLVR (205 aa)). 196–251 (QERLGLPVFVKPARGGSSIGISRVEAWADLDTAIKAARASDPKVLVESAIVGREIE) contributes to the ATP binding site. Residues D327, E340, and N342 each contribute to the Mg(2+) site.

The protein belongs to the D-alanine--D-alanine ligase family. The cofactor is Mg(2+). Mn(2+) is required as a cofactor.

It is found in the cytoplasm. The enzyme catalyses 2 D-alanine + ATP = D-alanyl-D-alanine + ADP + phosphate + H(+). It participates in cell wall biogenesis; peptidoglycan biosynthesis. Cell wall formation. The protein is D-alanine--D-alanine ligase of Frankia casuarinae (strain DSM 45818 / CECT 9043 / HFP020203 / CcI3).